The primary structure comprises 201 residues: Ribosomal RNA small subunit methyltransferase G (201 aa).

S-adenosyl-L-methionine is bound by residues Gly71, Phe76, 120-121 (LE), and Arg134.

This sequence belongs to the methyltransferase superfamily. RNA methyltransferase RsmG family.

It localises to the cytoplasm. The enzyme catalyses guanosine(527) in 16S rRNA + S-adenosyl-L-methionine = N(7)-methylguanosine(527) in 16S rRNA + S-adenosyl-L-homocysteine. Specifically methylates the N7 position of guanine in position 527 of 16S rRNA. The polypeptide is Ribosomal RNA small subunit methyltransferase G (Rhodospirillum rubrum (strain ATCC 11170 / ATH 1.1.1 / DSM 467 / LMG 4362 / NCIMB 8255 / S1)).